The primary structure comprises 198 residues: Glycerol-3-phosphate acyltransferase (198 aa).

The next 5 helical transmembrane spans lie at 10 to 30 (LIPI…WILV), 57 to 77 (GISF…ILIL), 86 to 106 (IMYL…WFLF), 118 to 138 (VVLS…AVVF), and 160 to 180 (AVTE…IVLI).

Belongs to the PlsY family. As to quaternary structure, probably interacts with PlsX.

Its subcellular location is the cell inner membrane. It catalyses the reaction an acyl phosphate + sn-glycerol 3-phosphate = a 1-acyl-sn-glycero-3-phosphate + phosphate. The protein operates within lipid metabolism; phospholipid metabolism. Its function is as follows. Catalyzes the transfer of an acyl group from acyl-phosphate (acyl-PO(4)) to glycerol-3-phosphate (G3P) to form lysophosphatidic acid (LPA). This enzyme utilizes acyl-phosphate as fatty acyl donor, but not acyl-CoA or acyl-ACP. The polypeptide is Glycerol-3-phosphate acyltransferase (Anaplasma marginale (strain Florida)).